An 89-amino-acid polypeptide reads, in one-letter code: Small ribosomal subunit protein bS20 (89 aa).

The protein belongs to the bacterial ribosomal protein bS20 family.

In terms of biological role, binds directly to 16S ribosomal RNA. The chain is Small ribosomal subunit protein bS20 from Helicobacter pylori (strain P12).